Here is a 99-residue protein sequence, read N- to C-terminus: MNDLRMYNVLVRPLVTEKSTMQLEKGNQISFAVATWANKPQIKKAIETIYSVKVEAVQVSNAKGKTKRFGKLEGKRKDWKRAVVRLQEGQSIDLFDQGA.

It belongs to the universal ribosomal protein uL23 family. As to quaternary structure, part of the 50S ribosomal subunit. Contacts protein L29, and trigger factor when it is bound to the ribosome.

In terms of biological role, one of the early assembly proteins it binds 23S rRNA. One of the proteins that surrounds the polypeptide exit tunnel on the outside of the ribosome. Forms the main docking site for trigger factor binding to the ribosome. This chain is Large ribosomal subunit protein uL23, found in Magnetococcus marinus (strain ATCC BAA-1437 / JCM 17883 / MC-1).